Consider the following 317-residue polypeptide: MSNAVHETDSKNTVASKPPLDPHLKALENEAIHIFREVAAEFDNPVMLYSIGKDSSVLLHLARKAFFPGRIPFPLLHVNTGWKFKEMIEFRDNIVKEYDLDLISYTNPRGALENVTPFSHGSALYTDIMKTEALRQALDAGQFDAAFGGARRDEEASRAKERIYSFRTPDHKWDPRNQRPELWNIYNGMVRKGESVRAFPLSNWTEVDIWRYIEAENIPLVPLYYAAERPYIERDGMMILAEDERLELLPGEEIKHGSIRFRTLGCFPLTGAIRSEAATLQDVIAELEIATVSERQGRAIDRDQSGSMEKKKREGYF.

The span at 1-10 (MSNAVHETDS) shows a compositional bias: basic and acidic residues. 2 disordered regions span residues 1–21 (MSNA…PPLD) and 298–317 (RAID…EGYF).

Belongs to the PAPS reductase family. CysD subfamily. In terms of assembly, heterodimer composed of CysD, the smaller subunit, and CysN.

The enzyme catalyses sulfate + ATP + H(+) = adenosine 5'-phosphosulfate + diphosphate. The protein operates within sulfur metabolism; hydrogen sulfide biosynthesis; sulfite from sulfate: step 1/3. With CysN forms the ATP sulfurylase (ATPS) that catalyzes the adenylation of sulfate producing adenosine 5'-phosphosulfate (APS) and diphosphate, the first enzymatic step in sulfur assimilation pathway. APS synthesis involves the formation of a high-energy phosphoric-sulfuric acid anhydride bond driven by GTP hydrolysis by CysN coupled to ATP hydrolysis by CysD. The sequence is that of Sulfate adenylyltransferase subunit 2 from Agrobacterium fabrum (strain C58 / ATCC 33970) (Agrobacterium tumefaciens (strain C58)).